The primary structure comprises 419 residues: [Butirosin acyl-carrier protein]--L-glutamate ligase (419 aa).

Residues 144 to 345 (RRLMERNGFN…FVESRVLVFN (202 aa)) enclose the ATP-grasp domain. 174–231 (ISAGFSKCVLKVPYGSSGKGLKVIDNERNFRFLLNYIQNRQTNVDLLLEGWHPHRLSL) is a binding site for ATP. Positions 298, 312, and 314 each coordinate Mg(2+). Positions 298, 312, and 314 each coordinate Mn(2+).

As to quaternary structure, monomer. It depends on Mg(2+) as a cofactor. The cofactor is Mn(2+).

It carries out the reaction holo-[BtrI ACP] + L-glutamate + ATP = gamma-L-glutamyl-[BtrI ACP] + ADP + phosphate. It catalyses the reaction 4-aminobutanoyl-[BtrI ACP] + L-glutamate + ATP = 4-(gamma-L-glutamylamino)butanoyl-[BtrI ACP] + ADP + phosphate + H(+). It participates in antibiotic biosynthesis; butirosin biosynthesis. Functionally, ATP-dependent ligase that catalyzes 2 steps in the biosynthesis of the side chain of the aminoglycoside antibiotics in the biosynthetic pathway of butirosin. Mediates the addition of one molecule of L-glutamate to a dedicated acyl-carrier protein. Following decarboxylation of the product by BtrK, adds a second L-glutamate molecule. This is [Butirosin acyl-carrier protein]--L-glutamate ligase (btrJ) from Niallia circulans (Bacillus circulans).